A 142-amino-acid polypeptide reads, in one-letter code: Mitochondrial import receptor subunit TOM22 homolog (142 aa).

Residues 1-18 (MAAAVAAAGAGEPLSPEE) show a composition bias toward low complexity. The interval 1–41 (MAAAVAAAGAGEPLSPEELLPKAEAEKAEEELEEDDDDELD) is disordered. Ala2 bears the N-acetylalanine mark. The Cytoplasmic portion of the chain corresponds to 2–83 (AAAVAAAGAG…AQKMYRFSRA (82 aa)). The residue at position 15 (Ser15) is a Phosphoserine. Acidic residues predominate over residues 27-41 (KAEEELEEDDDDELD). An import sequence; necessary for mitochondrion outer membrane localization and integration in the TOM complex region spans residues 41-50 (DETLSERLWG). Phosphothreonine is present on Thr43. The residue at position 45 (Ser45) is a Phosphoserine. The TMD; necessary for mitochondrion outer membrane localization and integration in the TOM complex stretch occupies residues 83–103 (AALWIGTTSFMILVLPVVFET). Residues 84–103 (ALWIGTTSFMILVLPVVFET) form a helical membrane-spanning segment. Topologically, residues 104–142 (EKLQMEQQQQLQQRQILLGPNTGLSGGMPGALPPLPGKM) are mitochondrial intermembrane. A C-tail signal; necessary for mitochondrion outer membrane localization and integration in the TOM complex region spans residues 123-142 (PNTGLSGGMPGALPPLPGKM).

Belongs to the Tom22 family. In terms of assembly, forms part of the preprotein translocase complex of the outer mitochondrial membrane (TOM complex) which consists of at least 7 different proteins (TOMM5, TOMM6, TOMM7, TOMM20, TOMM22, TOMM40 and TOMM70). Interacts with PPP2R2B and TOMM40.

It is found in the mitochondrion outer membrane. Functionally, central receptor component of the translocase of the outer membrane of mitochondria (TOM complex) responsible for the recognition and translocation of cytosolically synthesized mitochondrial preproteins. Together with the peripheral receptor TOM20 functions as the transit peptide receptor and facilitates the movement of preproteins into the translocation pore. Required for the translocation across the mitochondrial outer membrane of cytochrome P450 monooxygenases. The sequence is that of Mitochondrial import receptor subunit TOM22 homolog (Tomm22) from Mus musculus (Mouse).